The following is a 325-amino-acid chain: Homoserine O-succinyltransferase (325 aa).

The active-site Acyl-thioester intermediate is Cys-142. Residues Lys-163 and Ser-191 each contribute to the substrate site. Catalysis depends on His-234, which acts as the Proton acceptor. Glu-236 is an active-site residue. Substrate is bound at residue Arg-248.

Belongs to the MetA family.

It is found in the cytoplasm. It catalyses the reaction L-homoserine + succinyl-CoA = O-succinyl-L-homoserine + CoA. Its pathway is amino-acid biosynthesis; L-methionine biosynthesis via de novo pathway; O-succinyl-L-homoserine from L-homoserine: step 1/1. Transfers a succinyl group from succinyl-CoA to L-homoserine, forming succinyl-L-homoserine. The chain is Homoserine O-succinyltransferase from Bradyrhizobium japonicum.